Here is a 442-residue protein sequence, read N- to C-terminus: Syndecan-3 (442 aa).

Disordered regions lie at residues 1–24 (MKPGPPHRAGAAHGAGAGAGAAAG) and 57–87 (RPVDLEGSGDDDSFPDDELDDLYSGSGSGYF). The Extracellular portion of the chain corresponds to 1-387 (MKPGPPHRAG…SILERKEVLV (387 aa)). A compositionally biased stretch (gly residues) spans 13-24 (HGAGAGAGAAAG). Residues 63–77 (GSGDDDSFPDDELDD) show a composition bias toward acidic residues. O-linked (Xyl...) (glycosaminoglycan) serine glycosylation is found at Ser80, Ser82, Ser84, and Ser91. Ser108 is a glycosylation site (O-linked (GalNAc) serine; by GALNT13). O-linked (GalNAc) threonine; by GALNT13 glycosylation is found at Thr109 and Thr110. Disordered stretches follow at residues 150–173 (EEPSQRATTVSTTMATTAATSTGD), 225–326 (TTPE…ETTQ), and 340–367 (AAKASSPPGTLPKGARPGPGLLDNAIDS). 3 stretches are compositionally biased toward low complexity: residues 156–173 (ATTVSTTMATTAATSTGD), 225–238 (TTPEAPSPPTTAAV), and 275–286 (TLPLGTTAPGPT). An O-linked (GalNAc) serine; by GALNT13 glycan is attached at Ser160. O-linked (GalNAc) threonine; by GALNT13 glycans are attached at residues Thr161, Thr162, and Thr169. Residue Ser170 is glycosylated (O-linked (GalNAc) serine; by GALNT13). Residue Thr171 is glycosylated (O-linked (GalNAc) threonine; by GALNT13). The segment covering 288–299 (VAQTPTPETFLT) has biased composition (polar residues). Ser314 and Ser367 each carry an O-linked (Xyl...) (glycosaminoglycan) serine glycan. Residues 388 to 408 (AVIVGGVVGALFAAFLVTLLI) traverse the membrane as a helical segment. Phosphotyrosine occurs at positions 409, 419, 431, and 441. Topologically, residues 409-442 (YRMKKKDEGSYTLEEPKQASVTYQKPDKQEEFYA) are cytoplasmic. Positions 419 to 442 (YTLEEPKQASVTYQKPDKQEEFYA) are disordered. Residues 433-442 (KPDKQEEFYA) show a composition bias toward basic and acidic residues.

It belongs to the syndecan proteoglycan family. Interacts with TIAM1. Interacts with PTN (via heparan sulfate chains); this interaction mediates the neurite outgrowth-promoting signal from PTN to the cytoskeleton of growing neurites; this interaction mediates osteoblast recruitment. Interacts with MDK; this interaction induces SDC3 clustering; this interaction induces neuronal cell adhesion and neurite outgrowth. In terms of processing, O-glycosylated within the Thr/Ser-rich region which could interact with lectin domains on other molecules. In terms of tissue distribution, expressed in the nervous system, the adrenal gland, and the spleen.

It localises to the cell membrane. In terms of biological role, cell surface proteoglycan that may bear heparan sulfate. May have a role in the organization of cell shape by affecting the actin cytoskeleton, possibly by transferring signals from the cell surface in a sugar-dependent mechanism. This chain is Syndecan-3 (SDC3), found in Homo sapiens (Human).